Consider the following 367-residue polypeptide: Serine/threonine-protein kinase Sgk2 (367 aa).

The tract at residues Met1–Pro28 is disordered. Ser10 bears the Phosphoserine mark. Positions Arg15 to Pro28 are enriched in polar residues. Residues Phe35–Phe292 enclose the Protein kinase domain. ATP contacts are provided by residues Ile41 to Val49 and Lys64. A Nuclear localization signal motif is present at residues Lys68–Gln77. Asp159 serves as the catalytic Proton acceptor. Phosphothreonine; by PDPK1 is present on Thr193. Positions Ser293–Ser367 constitute an AGC-kinase C-terminal domain. Phosphoserine occurs at positions 334 and 356. Position 357 is a phosphotyrosine (Tyr357).

This sequence belongs to the protein kinase superfamily. AGC Ser/Thr protein kinase family. Activated by phosphorylation on Ser-356 by an unknown kinase (may be mTORC2 but not confirmed), transforming it into a substrate for PDPK1 which then phosphorylates it on Thr-193. Expressed in the proximal tubule and thick ascending limb of the loop of Henle (TALH).

The protein localises to the cytoplasm. Its subcellular location is the nucleus. It catalyses the reaction L-seryl-[protein] + ATP = O-phospho-L-seryl-[protein] + ADP + H(+). It carries out the reaction L-threonyl-[protein] + ATP = O-phospho-L-threonyl-[protein] + ADP + H(+). Its activity is regulated as follows. Two specific sites, one in the kinase domain (Thr-193) and the other in the C-terminal regulatory region (Ser-356), need to be phosphorylated for its full activation. Its function is as follows. Serine/threonine-protein kinase which is involved in the regulation of a wide variety of ion channels, membrane transporters, cell growth, survival and proliferation. Up-regulates Na(+) channels: SCNN1A/ENAC, K(+) channels: KCNA3/Kv1.3, KCNE1 and KCNQ1, amino acid transporter: SLC6A19, glutamate transporter: SLC1A6/EAAT4, glutamate receptors: GRIA1/GLUR1 and GRIK2/GLUR6, Na(+)/H(+) exchanger: SLC9A3/NHE3, and the Na(+)/K(+) ATPase. This chain is Serine/threonine-protein kinase Sgk2 (Sgk2), found in Rattus norvegicus (Rat).